Reading from the N-terminus, the 1323-residue chain is Receptor tyrosine-protein kinase let-23 (1323 aa).

The first 20 residues, 1–20 (MRYPPSIGSILLIIPIFLTF), serve as a signal peptide directing secretion. Residues 21 to 818 (FGNSNAQLWK…DIASRQRKTR (798 aa)) lie on the Extracellular side of the membrane. N-linked (GlcNAc...) asparagine glycosylation is found at N91 and N169. Disulfide bonds link C220–C228, C224–C236, C244–C251, C248–C262, C263–C271, C267–C279, C282–C291, C295–C322, C326–C337, C341–C356, and C359–C364. Residue N255 is glycosylated (N-linked (GlcNAc...) asparagine). The N-linked (GlcNAc...) asparagine glycan is linked to N376. 20 disulfide bridges follow: C520–C529, C524–C537, C540–C549, C553–C567, C570–C577, C574–C585, C588–C604, C608–C620, C623–C632, C627–C644, C647–C660, C670–C693, C696–C703, C700–C715, C717–C731, C735–C750, C753–C763, C757–C771, C774–C787, and C791–C805. N-linked (GlcNAc...) asparagine glycosylation is present at N561. N-linked (GlcNAc...) asparagine glycosylation is present at N655. An N-linked (GlcNAc...) asparagine glycan is attached at N746. N776 is a glycosylation site (N-linked (GlcNAc...) asparagine). A helical transmembrane segment spans residues 819 to 839 (MVIIGSVLFGFAVMFLFILLV). The Cytoplasmic segment spans residues 840–1323 (YWRCQRIGKK…EEVSQKETCL (484 aa)). Residues 885-1152 (TKLDKKLGAG…EFCKVPQLFL (268 aa)) form the Protein kinase domain. ATP contacts are provided by residues 891 to 899 (LGAGAFGTV) and K919. D1010 functions as the Proton acceptor in the catalytic mechanism. The span at 1265-1289 (GQTELSPSNGDYYNQPNTPSSSSGY) shows a compositional bias: polar residues. Residues 1265–1323 (GQTELSPSNGDYYNQPNTPSSSSGYYNEPHLKTKKPETSEEAEAVQYENEEVSQKETCL) form a disordered region. The segment covering 1293–1302 (PHLKTKKPET) has biased composition (basic and acidic residues). Positions 1303–1315 (SEEAEAVQYENEE) are enriched in acidic residues.

Belongs to the protein kinase superfamily. Tyr protein kinase family. EGF receptor subfamily. Expressed in vulval precursor cells (at protein level). Expressed in ALA neurons, 2 ventral head neurons, a single neuron in the tail, pharyngeal-intestinal valve and posterior arcade epithelial cells.

It is found in the apical cell membrane. It localises to the basolateral cell membrane. It catalyses the reaction L-tyrosyl-[protein] + ATP = O-phospho-L-tyrosyl-[protein] + ADP + H(+). Its function is as follows. Tyrosine-protein kinase receptor which, upon binding ligand lin-3, activates 2 signaling cascades: the let-60/Ras and MAP kinase signaling pathway and the let-60-independent phospholipase C-mediated Ca(2+) signaling pathway. Each pathway regulates distinct functions. By activating let-60/Ras, regulates larval development, induction of vulva cell precursors during vulva development, male spicule formation and posterior development of the epidermis. Probably by activating phospholipase plc-3 and inositol 1,4,5-trisphosphate receptor itr-1 signaling cascade downstream of ligand lin-3, plays a role in ovulation by promoting ovulatory gonadal sheath cell contractions. Probably by regulating neuronal transmission in ALA neurons, mediates, independently of let-60/Ras, the decrease in pharyngeal pumping and locomotion during the quiescent state that precedes each larval molt, downstream of lin-3 and upstream of plc-3. The chain is Receptor tyrosine-protein kinase let-23 from Caenorhabditis elegans.